Reading from the N-terminus, the 454-residue chain is Cobyrinate a,c-diamide synthase (454 aa).

Residues 244–435 (KIAVAYDSAF…VHIHFLSNIA (192 aa)) form the GATase cobBQ-type domain. C327 functions as the Nucleophile in the catalytic mechanism.

The protein belongs to the CobB/CbiA family. It depends on Mg(2+) as a cofactor.

The catalysed reaction is cob(II)yrinate + 2 L-glutamine + 2 ATP + 2 H2O = cob(II)yrinate a,c diamide + 2 L-glutamate + 2 ADP + 2 phosphate + 2 H(+). It functions in the pathway cofactor biosynthesis; adenosylcobalamin biosynthesis; cob(II)yrinate a,c-diamide from sirohydrochlorin (anaerobic route): step 10/10. Catalyzes the ATP-dependent amidation of the two carboxylate groups at positions a and c of cobyrinate, using either L-glutamine or ammonia as the nitrogen source. This is Cobyrinate a,c-diamide synthase from Thermoplasma volcanium (strain ATCC 51530 / DSM 4299 / JCM 9571 / NBRC 15438 / GSS1).